The primary structure comprises 616 residues: MASDGDGAAAVAALGISGGGGDDWAPPLRRNLPLLAPHEVKLAKLLLSEGQSHLFEHWPEPGVDDDKKRNFFDQVCRLNSSYPGGLASYIQNARKLLADSKAGKNPYDGFSPSVPSGEVLTFGDDNFVSLEEAGVKEARHAAFVLVAGGLGERLGYKGIKVALPRETTTGKCFLQHYIESILALQEASCKLVEGECNTKIPFVIMTSDDTNALTVKLLESNSYFGMEPSQVHILKQEKVACLADNDARLALDPNDKYKIQTKPHGHGDVHALLYSSGLLEQWKSTGRKWVLFFQDTNGLLFNAIPSALGVSATKGYNVNSLAVPRKAKEAIGGITKLTHVDGRTMVINVEYNQLDPLLRATGHPDGDANCETGYSPYPGNINQLILEIGPYMEELQKTHGAISEFVNPKYTDSTKTAFKSSTRLECMMQDYPKTLPPSAKVGFTVMDAWLTYAPVKNNPEDSAKVPKGNPYHSATSGEMAIYRANSLILRKAGAQIADPVIDTFNGQEVEVWPRITWIPRWGLIFKDVKAKVHSNSSVSQRSALVINGKNITIQGLSLDGTLIVNAKDEAKFNVTGHIENKGWTIQHVDHKDTSEKEEIRIRGFKFNKVEQLELNY.

Belongs to the USP family. Mg(2+) serves as cofactor. Mn(2+) is required as a cofactor.

The catalysed reaction is a monosaccharide 1-phosphate + UTP + H(+) = a UDP-monosaccharide + diphosphate. Its function is as follows. May function as the terminal enzyme of the myo-inositol oxidation (MIO) pathway. May also play a role in the salvage pathway for synthesis of nucleotide sugars. The chain is UDP-sugar pyrophosphorylase (USP) from Oryza sativa subsp. japonica (Rice).